We begin with the raw amino-acid sequence, 648 residues long: Nucleoside triphosphatase I (648 aa).

One can recognise a Helicase ATP-binding domain in the interval 48-213; it reads FIGLKNLNSM…NNLIGLLRPN (166 aa). 61-68 serves as a coordination point for ATP; sequence WDTGTGKT. The short motif at 151–154 is the DEXH box element; that stretch reads DEVH. The region spanning 379–542 is the Helicase C-terminal domain; the sequence is YIEACRIILN…KINVVFDLLK (164 aa). A binding to the cap-specific mRNA (nucleoside-2'-O-)-methyltransferase region spans residues 468-534; that stretch reads DIIILDMPWN…DIIKNKQGKI (67 aa).

This sequence belongs to the helicase family. NPH I subfamily. In terms of assembly, monomer. Interacts (via C-terminus) with RAP94 (via N-terminus). Interacts with the cap-specific mRNA (nucleoside-2'-O-)-methyltransferase.

It is found in the virion. It carries out the reaction a ribonucleoside 5'-triphosphate + H2O = a ribonucleoside 5'-diphosphate + phosphate + H(+). DNA-dependent ATPase required for providing the needed energy to achieve the termination of early transcripts. Acts in concert with the RAP94 subunit of the virion RNA polymerase and the capping enzyme/VTF to catalyze release of UUUUUNU-containing nascent RNA from the elongation complex. NPH-I must bind ssDNA in order to exhibit ATPase activity. This is Nucleoside triphosphatase I (NPH1) from Choristoneura fumiferana (Spruce budworm moth).